The primary structure comprises 139 residues: uncharacterized protein (139 aa).

The protein to E.coli YecT.

This is an uncharacterized protein from Rhizobium meliloti (strain 1021) (Ensifer meliloti).